Here is a 395-residue protein sequence, read N- to C-terminus: Probable alcohol dehydrogenase EutG (395 aa).

Residues Asp57, 116-120, 156-160, Lys178, and 197-201 contribute to the NAD(+) site; these read GSVLD, TTAGT, and LTEGV. Residues Asp212, His216, His281, and His295 each coordinate Fe cation. Residues His295 and Asp354 each contribute to the NAD(+) site.

Belongs to the iron-containing alcohol dehydrogenase family. Fe cation is required as a cofactor.

Its subcellular location is the bacterial microcompartment. It catalyses the reaction ethanol + NAD(+) = acetaldehyde + NADH + H(+). It participates in amine and polyamine degradation; ethanolamine degradation. Functionally, may act on the acetaldehyde produced from the degradation of ethanolamine, producing ethanol. Active on acetaldehyde and isobutyraldehyde in vitro. In vitro works equally well with NADH or NADPH. The sequence is that of Probable alcohol dehydrogenase EutG (eutG) from Escherichia coli (strain K12).